The primary structure comprises 229 residues: MSLLAQLDQKIAANGGLIVSCQPVPDSPLDKPDIVAAMALAAEQAGAVAIRIEGVANLQATRAVVSVPIIGIVKRDLEDSPVRITAYIEDVDALAQAGADIIAIDGTDRPRPVPVETLLARIHHHGLLAMTDCSTPEDGLACQKLGAEIIGTTLSGYTTPETPEEPDLTLVKRLSDAGCRVIAEGRYNTPAQAADAMRHGAWAVTVGSAITRLEHICQWYNTAMKKAVL.

It belongs to the NanE family.

It catalyses the reaction an N-acyl-D-glucosamine 6-phosphate = an N-acyl-D-mannosamine 6-phosphate. Its pathway is amino-sugar metabolism; N-acetylneuraminate degradation; D-fructose 6-phosphate from N-acetylneuraminate: step 3/5. Functionally, converts N-acetylmannosamine-6-phosphate (ManNAc-6-P) to N-acetylglucosamine-6-phosphate (GlcNAc-6-P). In Shigella dysenteriae serotype 1 (strain Sd197), this protein is Putative N-acetylmannosamine-6-phosphate 2-epimerase.